Consider the following 648-residue polypeptide: Threonine--tRNA ligase (648 aa).

The TGS domain occupies 1-63 (MAQISLTFPD…TQDAAIAIHT (63 aa)). Positions 247 to 544 (DHRKLGREMN…LIEEHAGKLP (298 aa)) are catalytic. Zn(2+) contacts are provided by C344, H395, and H521.

The protein belongs to the class-II aminoacyl-tRNA synthetase family. In terms of assembly, homodimer. The cofactor is Zn(2+).

The protein resides in the cytoplasm. The enzyme catalyses tRNA(Thr) + L-threonine + ATP = L-threonyl-tRNA(Thr) + AMP + diphosphate + H(+). Catalyzes the attachment of threonine to tRNA(Thr) in a two-step reaction: L-threonine is first activated by ATP to form Thr-AMP and then transferred to the acceptor end of tRNA(Thr). Also edits incorrectly charged L-seryl-tRNA(Thr). The protein is Threonine--tRNA ligase of Ruegeria sp. (strain TM1040) (Silicibacter sp.).